The sequence spans 353 residues: Photosystem II D2 protein (353 aa).

T2 carries the N-acetylthreonine modification. T2 is modified (phosphothreonine). The chain crosses the membrane as a helical span at residues 41–61 (CAYFALGGWFTGTTFVTSWYT). H118 is a chlorophyll a binding site. Residues 125–141 (GFMLRQFELARSVQLRP) form a helical membrane-spanning segment. Q130 and N143 together coordinate pheophytin a. The chain crosses the membrane as a helical span at residues 153–166 (VFVSVFLIYPLGQS). H198 contributes to the chlorophyll a binding site. The helical transmembrane segment at 208-228 (AALLCAIHGATVENTLFEDGD) threads the bilayer. A plastoquinone-binding residues include H215 and F262. Position 215 (H215) interacts with Fe cation. H269 serves as a coordination point for Fe cation. Residues 279–295 (GLWMSAIGVVGLALNLR) form a helical membrane-spanning segment.

It belongs to the reaction center PufL/M/PsbA/D family. In terms of assembly, PSII is composed of 1 copy each of membrane proteins PsbA, PsbB, PsbC, PsbD, PsbE, PsbF, PsbH, PsbI, PsbJ, PsbK, PsbL, PsbM, PsbT, PsbX, PsbY, PsbZ, Psb30/Ycf12, at least 3 peripheral proteins of the oxygen-evolving complex and a large number of cofactors. It forms dimeric complexes. It depends on The D1/D2 heterodimer binds P680, chlorophylls that are the primary electron donor of PSII, and subsequent electron acceptors. It shares a non-heme iron and each subunit binds pheophytin, quinone, additional chlorophylls, carotenoids and lipids. There is also a Cl(-1) ion associated with D1 and D2, which is required for oxygen evolution. The PSII complex binds additional chlorophylls, carotenoids and specific lipids. as a cofactor. Post-translationally, phosphorylated on threonine residue(s); phosphorylation increases with increasing light levels.

The protein resides in the plastid. It is found in the chloroplast thylakoid membrane. It carries out the reaction 2 a plastoquinone + 4 hnu + 2 H2O = 2 a plastoquinol + O2. Its function is as follows. Photosystem II (PSII) is a light-driven water:plastoquinone oxidoreductase that uses light energy to abstract electrons from H(2)O, generating O(2) and a proton gradient subsequently used for ATP formation. It consists of a core antenna complex that captures photons, and an electron transfer chain that converts photonic excitation into a charge separation. The D1/D2 (PsbA/PsbD) reaction center heterodimer binds P680, the primary electron donor of PSII as well as several subsequent electron acceptors. D2 is needed for assembly of a stable PSII complex. This is Photosystem II D2 protein from Marchantia polymorpha (Common liverwort).